A 51-amino-acid polypeptide reads, in one-letter code: Large ribosomal subunit protein bL33 (51 aa).

This sequence belongs to the bacterial ribosomal protein bL33 family.

The polypeptide is Large ribosomal subunit protein bL33 (Nitrosospira multiformis (strain ATCC 25196 / NCIMB 11849 / C 71)).